Reading from the N-terminus, the 388-residue chain is Phosphopentomutase (388 aa).

Mn(2+) contacts are provided by aspartate 11, aspartate 283, histidine 288, aspartate 324, histidine 325, and histidine 336.

It belongs to the phosphopentomutase family. Requires Mn(2+) as cofactor.

It is found in the cytoplasm. It carries out the reaction 2-deoxy-alpha-D-ribose 1-phosphate = 2-deoxy-D-ribose 5-phosphate. The catalysed reaction is alpha-D-ribose 1-phosphate = D-ribose 5-phosphate. It functions in the pathway carbohydrate degradation; 2-deoxy-D-ribose 1-phosphate degradation; D-glyceraldehyde 3-phosphate and acetaldehyde from 2-deoxy-alpha-D-ribose 1-phosphate: step 1/2. In terms of biological role, isomerase that catalyzes the conversion of deoxy-ribose 1-phosphate (dRib-1-P) and ribose 1-phosphate (Rib-1-P) to deoxy-ribose 5-phosphate (dRib-5-P) and ribose 5-phosphate (Rib-5-P), respectively. The protein is Phosphopentomutase of Anaeromyxobacter sp. (strain K).